The following is a 256-amino-acid chain: 1-(5-phosphoribosyl)-5-[(5-phosphoribosylamino)methylideneamino] imidazole-4-carboxamide isomerase (256 aa).

Catalysis depends on Asp8, which acts as the Proton acceptor. Asp130 functions as the Proton donor in the catalytic mechanism.

This sequence belongs to the HisA/HisF family.

It is found in the cytoplasm. The enzyme catalyses 1-(5-phospho-beta-D-ribosyl)-5-[(5-phospho-beta-D-ribosylamino)methylideneamino]imidazole-4-carboxamide = 5-[(5-phospho-1-deoxy-D-ribulos-1-ylimino)methylamino]-1-(5-phospho-beta-D-ribosyl)imidazole-4-carboxamide. Its pathway is amino-acid biosynthesis; L-histidine biosynthesis; L-histidine from 5-phospho-alpha-D-ribose 1-diphosphate: step 4/9. In Chlorobium phaeovibrioides (strain DSM 265 / 1930) (Prosthecochloris vibrioformis (strain DSM 265)), this protein is 1-(5-phosphoribosyl)-5-[(5-phosphoribosylamino)methylideneamino] imidazole-4-carboxamide isomerase.